The following is a 265-amino-acid chain: Flap endonuclease Xni (265 aa).

D111 serves as a coordination point for Mg(2+). One can recognise a 5'-3' exonuclease domain in the interval 167–260 (VVPAQLVDFW…NLREIRYPPA (94 aa)). The K(+) site is built by L178, V189, and I192. The tract at residues 191–196 (GIGPKT) is interaction with DNA.

The protein belongs to the Xni family. Requires Mg(2+) as cofactor. K(+) is required as a cofactor.

In terms of biological role, has flap endonuclease activity. During DNA replication, flap endonucleases cleave the 5'-overhanging flap structure that is generated by displacement synthesis when DNA polymerase encounters the 5'-end of a downstream Okazaki fragment. This Aeromonas salmonicida (strain A449) protein is Flap endonuclease Xni.